The following is a 191-amino-acid chain: SCO2-like protein RP031 (191 aa).

It belongs to the SCO1/2 family.

This is SCO2-like protein RP031 from Rickettsia prowazekii (strain Madrid E).